The primary structure comprises 313 residues: tRNA dimethylallyltransferase (313 aa).

11–18 contributes to the ATP binding site; it reads GPTACGKT. A substrate-binding site is contributed by 13–18; it reads TACGKT. Interaction with substrate tRNA regions lie at residues 36–39, 160–164, and 243–248; these read DSAL, QRIGR, and RCVGYR.

Belongs to the IPP transferase family. Monomer. Requires Mg(2+) as cofactor.

The catalysed reaction is adenosine(37) in tRNA + dimethylallyl diphosphate = N(6)-dimethylallyladenosine(37) in tRNA + diphosphate. Functionally, catalyzes the transfer of a dimethylallyl group onto the adenine at position 37 in tRNAs that read codons beginning with uridine, leading to the formation of N6-(dimethylallyl)adenosine (i(6)A). The chain is tRNA dimethylallyltransferase from Neisseria gonorrhoeae (strain ATCC 700825 / FA 1090).